A 270-amino-acid polypeptide reads, in one-letter code: Phosphodiesterase YaeI (270 aa).

Residues Asp-56, His-58, Asp-88, Asn-120, His-209, and His-211 each contribute to the a divalent metal cation site.

The protein belongs to the metallophosphoesterase superfamily. Requires a divalent metal cation as cofactor.

Shows phosphodiesterase activity, hydrolyzing phosphodiester bond in the artificial chromogenic substrate bis-p-nitrophenyl phosphate (bis-pNPP). The protein is Phosphodiesterase YaeI (yaeI) of Escherichia coli (strain K12).